We begin with the raw amino-acid sequence, 214 residues long: Thiamine-phosphate synthase (214 aa).

4-amino-2-methyl-5-(diphosphooxymethyl)pyrimidine-binding positions include Q38–K42 and N70. Mg(2+) contacts are provided by D71 and D90. Residues S109 and K138 each coordinate 4-amino-2-methyl-5-(diphosphooxymethyl)pyrimidine. Residue G165 participates in 2-[(2R,5Z)-2-carboxy-4-methylthiazol-5(2H)-ylidene]ethyl phosphate binding.

The protein belongs to the thiamine-phosphate synthase family. Mg(2+) is required as a cofactor.

The enzyme catalyses 2-[(2R,5Z)-2-carboxy-4-methylthiazol-5(2H)-ylidene]ethyl phosphate + 4-amino-2-methyl-5-(diphosphooxymethyl)pyrimidine + 2 H(+) = thiamine phosphate + CO2 + diphosphate. The catalysed reaction is 2-(2-carboxy-4-methylthiazol-5-yl)ethyl phosphate + 4-amino-2-methyl-5-(diphosphooxymethyl)pyrimidine + 2 H(+) = thiamine phosphate + CO2 + diphosphate. It carries out the reaction 4-methyl-5-(2-phosphooxyethyl)-thiazole + 4-amino-2-methyl-5-(diphosphooxymethyl)pyrimidine + H(+) = thiamine phosphate + diphosphate. The protein operates within cofactor biosynthesis; thiamine diphosphate biosynthesis; thiamine phosphate from 4-amino-2-methyl-5-diphosphomethylpyrimidine and 4-methyl-5-(2-phosphoethyl)-thiazole: step 1/1. Its function is as follows. Condenses 4-methyl-5-(beta-hydroxyethyl)thiazole monophosphate (THZ-P) and 2-methyl-4-amino-5-hydroxymethyl pyrimidine pyrophosphate (HMP-PP) to form thiamine monophosphate (TMP). This is Thiamine-phosphate synthase from Caldanaerobacter subterraneus subsp. tengcongensis (strain DSM 15242 / JCM 11007 / NBRC 100824 / MB4) (Thermoanaerobacter tengcongensis).